A 522-amino-acid polypeptide reads, in one-letter code: tRNA-2-methylthio-N(6)-dimethylallyladenosine synthase (522 aa).

An MTTase N-terminal domain is found at 24–140 (RTYEVKTYGC…LPTLLQRAEH (117 aa)). Cys33, Cys69, Cys103, Cys177, Cys181, and Cys184 together coordinate [4Fe-4S] cluster. The Radical SAM core domain occupies 163–399 (RESAYAGWVS…MVVQEQVCEE (237 aa)). The 72-residue stretch at 402–473 (QKLIGTTVEL…PFFLIADSGV (72 aa)) folds into the TRAM domain.

It belongs to the methylthiotransferase family. MiaB subfamily. In terms of assembly, monomer. It depends on [4Fe-4S] cluster as a cofactor.

The protein localises to the cytoplasm. It carries out the reaction N(6)-dimethylallyladenosine(37) in tRNA + (sulfur carrier)-SH + AH2 + 2 S-adenosyl-L-methionine = 2-methylsulfanyl-N(6)-dimethylallyladenosine(37) in tRNA + (sulfur carrier)-H + 5'-deoxyadenosine + L-methionine + A + S-adenosyl-L-homocysteine + 2 H(+). Catalyzes the methylthiolation of N6-(dimethylallyl)adenosine (i(6)A), leading to the formation of 2-methylthio-N6-(dimethylallyl)adenosine (ms(2)i(6)A) at position 37 in tRNAs that read codons beginning with uridine. This Corynebacterium glutamicum (strain ATCC 13032 / DSM 20300 / JCM 1318 / BCRC 11384 / CCUG 27702 / LMG 3730 / NBRC 12168 / NCIMB 10025 / NRRL B-2784 / 534) protein is tRNA-2-methylthio-N(6)-dimethylallyladenosine synthase.